The sequence spans 179 residues: Lebocin-3 (179 aa).

Positions 1–16 (MYKFLVFSSVLVLFFA) are cleaved as a signal peptide. A propeptide spanning residues 17–120 (QASCQRFIQP…QPIESHRNTR (104 aa)) is cleaved from the precursor. O-linked (GalNAc...) threonine glycosylation is present at threonine 135. Residues 153 to 179 (RRHASEDQEELRQYNEHFLIPRDIFQE) constitute a propeptide that is removed on maturation.

This sequence belongs to the lebocin family. O-glycosylation is important for the antibacterial activity of lebocin. In terms of tissue distribution, hemolymph. Produced in fat body.

Its subcellular location is the secreted. In terms of biological role, antibacterial peptide. The polypeptide is Lebocin-3 (LEB3) (Bombyx mori (Silk moth)).